The primary structure comprises 129 residues: UPF0344 protein SAB0838 (129 aa).

Helical transmembrane passes span 1–21 (MLHLHILSWVLAIILFIATYL), 36–56 (LHMVLRLFMLLMLISGFWILI), 67–87 (MLLTLKMLCGVAVVGLMEVSI), and 99–119 (MFWITIALIIITMVLGVILPL).

Belongs to the UPF0344 family.

The protein resides in the cell membrane. The chain is UPF0344 protein SAB0838 from Staphylococcus aureus (strain bovine RF122 / ET3-1).